The primary structure comprises 138 residues: Large ribosomal subunit protein uL16 (138 aa).

Residues 1-19 (MLIPKRVKYRRQHRPHRSG) show a composition bias toward basic residues. A disordered region spans residues 1 to 24 (MLIPKRVKYRRQHRPHRSGVSKGG).

This sequence belongs to the universal ribosomal protein uL16 family. As to quaternary structure, part of the 50S ribosomal subunit.

Its function is as follows. Binds 23S rRNA and is also seen to make contacts with the A and possibly P site tRNAs. In Corynebacterium diphtheriae (strain ATCC 700971 / NCTC 13129 / Biotype gravis), this protein is Large ribosomal subunit protein uL16.